The sequence spans 224 residues: UPF0319 protein VC_1853 (224 aa).

The N-terminal stretch at 1 to 21 (MKLNPLILGLLLSFSAGHSLA) is a signal peptide.

This sequence belongs to the UPF0319 family.

In Vibrio cholerae serotype O1 (strain ATCC 39315 / El Tor Inaba N16961), this protein is UPF0319 protein VC_1853.